The sequence spans 231 residues: 7-cyano-7-deazaguanine synthase (231 aa).

17 to 27 contributes to the ATP binding site; the sequence is FSGGMDSFTLL. Residues C193, C201, C204, and C207 each coordinate Zn(2+).

It belongs to the QueC family. Zn(2+) serves as cofactor.

It carries out the reaction 7-carboxy-7-deazaguanine + NH4(+) + ATP = 7-cyano-7-deazaguanine + ADP + phosphate + H2O + H(+). The protein operates within purine metabolism; 7-cyano-7-deazaguanine biosynthesis. Functionally, catalyzes the ATP-dependent conversion of 7-carboxy-7-deazaguanine (CDG) to 7-cyano-7-deazaguanine (preQ(0)). The polypeptide is 7-cyano-7-deazaguanine synthase (Hahella chejuensis (strain KCTC 2396)).